Consider the following 379-residue polypeptide: uncharacterized protein (379 aa).

This is an uncharacterized protein from Acanthamoeba polyphaga (Amoeba).